We begin with the raw amino-acid sequence, 493 residues long: Putative lon protease homolog (493 aa).

52–59 (GPPGVGKS) is a binding site for ATP.

Belongs to the peptidase S16 family.

The polypeptide is Putative lon protease homolog (Thermoplasma acidophilum (strain ATCC 25905 / DSM 1728 / JCM 9062 / NBRC 15155 / AMRC-C165)).